Here is a 463-residue protein sequence, read N- to C-terminus: MHLHFTPRQIVEKLDQYIIGQKDAKKAVAVALRNRYRRSKLAENLRDEIAPKNILMIGPTGVGKTEVARRMAKLVGAPFIKVEATKFTEVGYVGRDVESMVRDLVETSVRIVKEEMVVKVQDKAEEQANQRLVEILVPSPEKQSGFKNPLEMLFGGAQNSNQTTDSQEDVEIEKKRQDVERKLAAGLLEDEIVSIEVTEQQSSMFDMLQGTGMEQMGMNFQDALGSFMPKKTKKRKLSVKEARKVLTNEEAQRLIDMDEVTQEAVYRAEQLGIIFIDEIDKIAGKQSNSVDVSREGVQRDILPIVEGSNVATKYGSVKTDYILFVAAGAFHMSKPSDLIPELQGRFPIRVELTKLSTDDFVKILIEPDNALIKQYIALLATEGIEIEFSDEAIRKIAEIAYQVNQDTDNIGARRLHTIMEKLLEDLSFEASEITLEKITITPQYVEEKLATIAKNKDVSQFIL.

Residues Ile19, 61-66 (GVGKTE), Asp277, Glu341, and Arg413 contribute to the ATP site.

Belongs to the ClpX chaperone family. HslU subfamily. In terms of assembly, a double ring-shaped homohexamer of HslV is capped on each side by a ring-shaped HslU homohexamer. The assembly of the HslU/HslV complex is dependent on binding of ATP.

It localises to the cytoplasm. ATPase subunit of a proteasome-like degradation complex; this subunit has chaperone activity. The binding of ATP and its subsequent hydrolysis by HslU are essential for unfolding of protein substrates subsequently hydrolyzed by HslV. HslU recognizes the N-terminal part of its protein substrates and unfolds these before they are guided to HslV for hydrolysis. This chain is ATP-dependent protease ATPase subunit HslU, found in Bacillus cereus (strain AH187).